We begin with the raw amino-acid sequence, 265 residues long: Tryptophan synthase alpha chain (265 aa).

Catalysis depends on proton acceptor residues glutamate 49 and glutamate 60.

Belongs to the TrpA family. Tetramer of two alpha and two beta chains.

It catalyses the reaction (1S,2R)-1-C-(indol-3-yl)glycerol 3-phosphate + L-serine = D-glyceraldehyde 3-phosphate + L-tryptophan + H2O. It functions in the pathway amino-acid biosynthesis; L-tryptophan biosynthesis; L-tryptophan from chorismate: step 5/5. Functionally, the alpha subunit is responsible for the aldol cleavage of indoleglycerol phosphate to indole and glyceraldehyde 3-phosphate. The protein is Tryptophan synthase alpha chain of Janthinobacterium sp. (strain Marseille) (Minibacterium massiliensis).